A 61-amino-acid chain; its full sequence is Large ribosomal subunit protein bL28 (61 aa).

It belongs to the bacterial ribosomal protein bL28 family.

The chain is Large ribosomal subunit protein bL28 (rpmB) from Geobacillus stearothermophilus (Bacillus stearothermophilus).